Reading from the N-terminus, the 443-residue chain is Methionine aminopeptidase 2-1 (443 aa).

Residues Met-1–Asn-90 are disordered. The segment covering Ala-33 to Gly-48 has biased composition (acidic residues). Positions Lys-58–Ala-73 are enriched in basic residues. Substrate is bound at residue His-196. A divalent metal cation is bound by residues Asp-216, Asp-227, and His-296. His-304 lines the substrate pocket. Residues Glu-329 and Glu-424 each coordinate a divalent metal cation.

Belongs to the peptidase M24A family. Methionine aminopeptidase eukaryotic type 2 subfamily. Co(2+) is required as a cofactor. Zn(2+) serves as cofactor. It depends on Mn(2+) as a cofactor. Requires Fe(2+) as cofactor.

It is found in the cytoplasm. The catalysed reaction is Release of N-terminal amino acids, preferentially methionine, from peptides and arylamides.. In terms of biological role, cotranslationally removes the N-terminal methionine from nascent proteins. The N-terminal methionine is often cleaved when the second residue in the primary sequence is small and uncharged (Met-Ala-, Cys, Gly, Pro, Ser, Thr, or Val). In Talaromyces stipitatus (strain ATCC 10500 / CBS 375.48 / QM 6759 / NRRL 1006) (Penicillium stipitatum), this protein is Methionine aminopeptidase 2-1.